The following is a 227-amino-acid chain: Ribonuclease 3 (227 aa).

In terms of domain architecture, RNase III spans 4–133 (FEKLEKLLSY…LIAAIYLDSN (130 aa)). E46 is a binding site for Mg(2+). D50 is a catalytic residue. 2 residues coordinate Mg(2+): N119 and E122. E122 is an active-site residue. A DRBM domain is found at 158–226 (DPKTALQEWA…ARSLLHRLKN (69 aa)).

Belongs to the ribonuclease III family. In terms of assembly, homodimer. It depends on Mg(2+) as a cofactor.

The protein resides in the cytoplasm. The catalysed reaction is Endonucleolytic cleavage to 5'-phosphomonoester.. Its function is as follows. Digests double-stranded RNA. Involved in the processing of primary rRNA transcript to yield the immediate precursors to the large and small rRNAs (23S and 16S). Processes some mRNAs, and tRNAs when they are encoded in the rRNA operon. Processes pre-crRNA and tracrRNA of type II CRISPR loci if present in the organism. The protein is Ribonuclease 3 of Rickettsia conorii (strain ATCC VR-613 / Malish 7).